A 347-amino-acid polypeptide reads, in one-letter code: Phenylalanine--tRNA ligase alpha subunit (347 aa).

Glutamate 261 lines the Mg(2+) pocket.

It belongs to the class-II aminoacyl-tRNA synthetase family. Phe-tRNA synthetase alpha subunit type 1 subfamily. In terms of assembly, tetramer of two alpha and two beta subunits. It depends on Mg(2+) as a cofactor.

The protein localises to the cytoplasm. It carries out the reaction tRNA(Phe) + L-phenylalanine + ATP = L-phenylalanyl-tRNA(Phe) + AMP + diphosphate + H(+). This is Phenylalanine--tRNA ligase alpha subunit from Streptococcus pyogenes serotype M3 (strain ATCC BAA-595 / MGAS315).